A 272-amino-acid polypeptide reads, in one-letter code: Transformer-2 sex-determining protein (272 aa).

Disordered regions lie at residues 21 to 102 (KHKC…DHPQ) and 182 to 272 (ITQR…QSRY). Over residues 26-41 (HSSATSSPSSAASSES) the composition is skewed to low complexity. Residues 87 to 102 (TSRDRQRMRQARDHPQ) are compositionally biased toward basic and acidic residues. Residues 105–183 (RCIGVFGLNT…RRIRVDYSIT (79 aa)) form the RRM domain. The tract at residues 184–204 (QRAHTPTPGVYMGRPSRPLGR) is linker. Positions 205 to 218 (RSRERDYSTRDTSR) are enriched in basic and acidic residues. A compositionally biased stretch (basic residues) spans 238 to 266 (RKYRSRHRYDRSRSRTRSYSRSRSPRKPV).

This sequence belongs to the splicing factor SR family. Post-translationally, extensively phosphorylated on serine residues in the RS domain.

In terms of biological role, required for female sex determination in somatic cells and for spermatogenesis in male germ cells. Positive regulator of female-specific splicing and/or polyadenylation of doublesex (dsx) pre-mRNA. Splicing requires an enhancer complex, dsxRE (dsx repeat element: which contains six copies of a 13-nucleotide repeat and a purine-rich enhancer (PRE)). DsxRE is formed through cooperative interactions between tra, tra2 and the sr proteins, and these interactions require both the repeat sequences and PRE. PRE is required for specific binding of tra2 to the dsxRE. Protein-RNA and protein-protein interactions are involved in tra-2 dependent activation and repression of alternative splicing. In Drosophila virilis (Fruit fly), this protein is Transformer-2 sex-determining protein (tra2).